The following is a 484-amino-acid chain: MKFIVKLFPEIMMKSKPVRMRFTKMLETNIRNVLKKVDESAKVQRQWDKIMVMVPDDRPDLVEAFGERLACIPGIAHVLQVNVSTFTSVDDIYQQTLVAYKEQLVGKTFCVRVKRAGKHDFNSIEVERYVGGGLNQFTEAAGVRLKNPDMTVHLEIDNDNLYLIDKRIEGLGGFPMATQEDVLSLISGGFDSGVSSYQFIKRGSRTHYCFFNLGGDQHEIGVKQVAYHLWQKYGESHKVKFISVPFDPVVQEILERIDNGQMGVILKRMMMRAATRVAQKMGIQALVTGEAMGQVSSQTLTNLNVIDRCTEQLILRPLIAMDKQDIINLSRQIGTEDFAKSIPEYCGVISQKPTVKAVLSKVEAEEAKFSEDLLDRVIADAEIIDIREIATQMDTKITETETVDSINANEIIIDVRAPEEEEKSPLKIDGVEVKAIPFYKLATQFADLDKDKSYLLYCDRGVMSKLQALYLQEQGYTNVKVYRP.

The THUMP domain occupies 63 to 167 (EAFGERLACI…NDNLYLIDKR (105 aa)). Residues 185–186 (LI), K267, G289, and Q298 each bind ATP. A disulfide bond links C346 and C458. The region spanning 406–484 (INANEIIIDV…GYTNVKVYRP (79 aa)) is the Rhodanese domain. C458 functions as the Cysteine persulfide intermediate in the catalytic mechanism.

Belongs to the ThiI family.

The protein resides in the cytoplasm. It catalyses the reaction [ThiI sulfur-carrier protein]-S-sulfanyl-L-cysteine + a uridine in tRNA + 2 reduced [2Fe-2S]-[ferredoxin] + ATP + H(+) = [ThiI sulfur-carrier protein]-L-cysteine + a 4-thiouridine in tRNA + 2 oxidized [2Fe-2S]-[ferredoxin] + AMP + diphosphate. The enzyme catalyses [ThiS sulfur-carrier protein]-C-terminal Gly-Gly-AMP + S-sulfanyl-L-cysteinyl-[cysteine desulfurase] + AH2 = [ThiS sulfur-carrier protein]-C-terminal-Gly-aminoethanethioate + L-cysteinyl-[cysteine desulfurase] + A + AMP + 2 H(+). It participates in cofactor biosynthesis; thiamine diphosphate biosynthesis. Its function is as follows. Catalyzes the ATP-dependent transfer of a sulfur to tRNA to produce 4-thiouridine in position 8 of tRNAs, which functions as a near-UV photosensor. Also catalyzes the transfer of sulfur to the sulfur carrier protein ThiS, forming ThiS-thiocarboxylate. This is a step in the synthesis of thiazole, in the thiamine biosynthesis pathway. The sulfur is donated as persulfide by IscS. In Shewanella halifaxensis (strain HAW-EB4), this protein is tRNA sulfurtransferase.